A 682-amino-acid chain; its full sequence is PWWP domain-containing DNA repair factor 3A (682 aa).

S105 carries the post-translational modification Phosphoserine. Positions 121-145 (EKTDADVASQVSSAPSPSLLGEDGQ) are disordered. Positions 127–140 (VASQVSSAPSPSLL) are enriched in low complexity. Position 168 is a phosphoserine (S168). Disordered stretches follow at residues 179–318 (GPKT…GAAP) and 334–369 (GAGDKPEEDPVSSEESTGFKSTHSLLEEEEEEEEEP). Over residues 203–220 (HGQESTTKKRQRNLGEKP) the composition is skewed to basic and acidic residues. A phosphoserine mark is found at S345 and S346. A compositionally biased stretch (polar residues) spans 346 to 357 (SEESTGFKSTHS). In terms of domain architecture, PWWP spans 383–444 (VGMLVWLKYQ…KHFDCKEKHA (62 aa)).

It belongs to the PWWP3A family. In terms of assembly, interacts with TP53BP1 (via BRCT domain); the interaction is not dependent on its phosphorylation status. Binds nucleosomes. Interacts with trimethylated 'Lys-36' of histone H3 (H3K36me3) (in vitro).

Its subcellular location is the nucleus. Its function is as follows. Involved in the DNA damage response pathway by contributing to the maintenance of chromatin architecture. Recruited to the vicinity of DNA breaks by TP53BP1 and plays an accessory role to facilitate damage-induced chromatin changes and promoting chromatin relaxation. Required for efficient DNA repair and cell survival following DNA damage. In Mus musculus (Mouse), this protein is PWWP domain-containing DNA repair factor 3A (Pwwp3a).